The following is a 1643-amino-acid chain: Neurexin-3 (1643 aa).

A signal peptide spans 1–27; sequence MSSTLHSVFFTLKVSILLGSLLGLCLG. The Laminin G-like 1 domain occupies 28-202; it reads LEFMGLPNQW…GVQMDAEGPC (175 aa). Topologically, residues 28 to 1568 are extracellular; the sequence is LEFMGLPNQW…EVIRESSSTT (1541 aa). N-linked (GlcNAc...) asparagine glycosylation is found at asparagine 58 and asparagine 105. One can recognise an EGF-like 1 domain in the interval 198-235; sequence AEGPCGERPCENGGICFLLDGHPTCDCSTTGYGGKLCS. Cystine bridges form between cysteine 202–cysteine 213, cysteine 207–cysteine 222, and cysteine 224–cysteine 234. Laminin G-like domains lie at 258–440 and 447–639; these read VATF…VFKC and DPIN…KSSC. Aspartate 304, leucine 321, and methionine 374 together coordinate Ca(2+). 5 disulfide bridges follow: cysteine 404-cysteine 440, cysteine 610-cysteine 639, cysteine 647-cysteine 658, cysteine 652-cysteine 667, and cysteine 669-cysteine 679. Residues 643-680 enclose the EGF-like 2 domain; the sequence is SAKQCDSYPCKNNAVCKDGWNRFICDCTGTGYWGRTCE. Laminin G-like domains lie at 685-857 and 871-1046; these read ILSY…IDYC and DPVT…ERGC. Ca(2+) contacts are provided by aspartate 732 and leucine 749. Asparagine 757 carries an N-linked (GlcNAc...) asparagine glycan. Arginine 807 serves as a coordination point for Ca(2+). Disulfide bonds link cysteine 1018–cysteine 1046, cysteine 1053–cysteine 1064, cysteine 1058–cysteine 1073, and cysteine 1075–cysteine 1085. The EGF-like 3 domain occupies 1049-1086; sequence PSTTCQEDSCANQGVCMQQWEGFTCDCSMTSYSGNQCN. Positions 1090 to 1260 constitute a Laminin G-like 6 domain; it reads ATYIFGKSGG…NPNIKINGSV (171 aa). Residues aspartate 1142 and isoleucine 1159 each coordinate Ca(2+). A glycan (N-linked (GlcNAc...) asparagine) is linked at asparagine 1189. Ca(2+) contacts are provided by isoleucine 1211 and asparagine 1213. N-linked (GlcNAc...) asparagine glycans are attached at residues asparagine 1257 and asparagine 1301. Residues 1294–1318 are disordered; the sequence is ATTTTRKNRSTASIQPTSDDLVSSA. The segment covering 1303–1318 has biased composition (polar residues); that stretch reads STASIQPTSDDLVSSA. Serine 1317 carries an O-linked (Xyl...) (heparan sulfate) serine glycan. The chain crosses the membrane as a helical span at residues 1569 to 1589; the sequence is GMVVGIVAAAALCILILLYAM. Residues 1590 to 1643 are Cytoplasmic-facing; sequence YKYRNRDEGSYQVDETRNYISNSAQSNGTLMKEKQQSSKSGHKKQKNKDREYYV. Positions 1611 to 1643 are disordered; that stretch reads NSAQSNGTLMKEKQQSSKSGHKKQKNKDREYYV.

The protein belongs to the neurexin family. In terms of assembly, the laminin G-like domain 2 binds to NXPH1. Specific isoforms bind to alpha-dystroglycan. The cytoplasmic C-terminal region binds to CASK. Specific isoforms bind neuroligins NLGN1, NLGN2 and NLGN3. Interacts with CLSTN3. In terms of processing, O-glycosylated; contains heparan sulfate. Heparan sulfate attachment is required for synapse development by mediating interactions with neuroligins. In terms of tissue distribution, expressed in the blood vessel walls (at protein level). Highly expressed in brain, lung, and pancreas; a lower level of expression is detectable in heart, placenta, liver, and kidney, whereas no expression can be observed in skeletal muscle. Isoform 4a is heart-specific.

It localises to the presynaptic cell membrane. Neuronal cell surface protein that may be involved in cell recognition and cell adhesion. May mediate intracellular signaling. This chain is Neurexin-3 (NRXN3), found in Homo sapiens (Human).